Here is a 441-residue protein sequence, read N- to C-terminus: G2/mitotic-specific cyclin-2 (441 aa).

It belongs to the cyclin family. Cyclin AB subfamily. Interacts with the CDC2 and CDK2 protein kinases to form a serine/threonine kinase holoenzyme complex. The cyclin subunit imparts substrate specificity to the complex.

In terms of biological role, essential for the control of the cell cycle at the G2/M (mitosis) transition. G2/M cyclins accumulate steadily during G2 and are abruptly destroyed at mitosis. The polypeptide is G2/mitotic-specific cyclin-2 (Antirrhinum majus (Garden snapdragon)).